The chain runs to 874 residues: MAAGRRVGPGPPSRPTMAPWKKKRLRKRRTGASQGRDSDSDDGEFEIQAEDDARARKLGPGRALPSFPTSECVSDVEPDTREMVRAQNKKKKKSGGFQSMGLSYPVFKGIMKKGYKVPTPIQRKTIPVILDGKDVVAMARTGSGKTACFLLPMFERLKARSAQTGARALILSPTRELALQTMKFTKELGKFTGLKTALILGGDKMEDQFAALHENPDIIIATPGRLVHVAVEMNLKLQSVEYVVFDEADRLFEMGFAEQLQEIIGRLPGGHQTVLFSATLPKLLVEFARAGLTEPVLIRLDVDSKLNEQLKTSFLLVREDTKAAVLLYLLQNVVRPQDQTVVFVATKHHAEYLTELLMGQGVSCAHIYSALDQTARKINLAKFTHNKCSTLIVTDLAARGLDIPLLDNVINYSFPAKGKLFLHRVGRVARAGRSGTAYSLVAPDEVPYLLDLHLFLGRSVTLARPCEEPSVADAVGRDGVLGRVPQSVVDDEDSSLQTAMGASLDLQGLHRVANNAQQQYVRSRPAPSPESIKRAKELDLAELGLHPLFSSCFEEGELQRLRLVDSIKNYRTRTTIFEINASSKDPSSQMMRAKRQRDRKAVASFQQRRQERQEGPADPAPQRELPQEEEEEMVETVEGVFTEVVGQKRPRPGPSQGAKRRRMETRQRDQEFYVPYRPKDFDSERGLSVSGAGGAFEQQVAGAVLDLMGDEAQNMSRGQQQLKWDRKKKRFVGQSGQEDKKKIKTESGRFISSSYKRDLYQKWKQKQKIDDRDSEEEGPSNQRGPGPRRGGKRGRSQGTSQPRASSVPAGRMRSELKTKEQILKQRRQAQKQRFLQRGGLKQLSARNRRRAQELRQGAFGRGAPSRKGKMRKRM.

The segment at 1-76 is disordered; that stretch reads MAAGRRVGPG…FPTSECVSDV (76 aa). Positions 20-30 are enriched in basic residues; sequence WKKKRLRKRRT. Thr30 is subject to Phosphothreonine. A phosphoserine mark is found at Ser33, Ser38, Ser40, and Ser74. The span at 39–50 shows a compositional bias: acidic residues; the sequence is DSDDGEFEIQAE. The short motif at 95–123 is the Q motif element; it reads GGFQSMGLSYPVFKGIMKKGYKVPTPIQR. A Helicase ATP-binding domain is found at 126–298; sequence IPVILDGKDV…RAGLTEPVLI (173 aa). 139–146 is an ATP binding site; that stretch reads ARTGSGKT. A DEAD box motif is present at residues 246 to 249; it reads DEAD. The Helicase C-terminal domain maps to 328–472; the sequence is YLLQNVVRPQ…ARPCEEPSVA (145 aa). The span at 581-590 shows a compositional bias: polar residues; the sequence is ASSKDPSSQM. Residues 581-687 are disordered; that stretch reads ASSKDPSSQM…PKDFDSERGL (107 aa). Positions 636 to 645 are enriched in low complexity; that stretch reads TVEGVFTEVV. Positions 664–685 are enriched in basic and acidic residues; it reads ETRQRDQEFYVPYRPKDFDSER. A phosphoserine mark is found at Ser688 and Ser690. The disordered stretch occupies residues 712–874; the sequence is AQNMSRGQQQ…SRKGKMRKRM (163 aa). Polar residues predominate over residues 713-722; sequence QNMSRGQQQL. Basic and acidic residues-rich tracts occupy residues 737 to 747 and 755 to 771; these read QEDKKKIKTES and YKRD…KIDD. Ser774 and Ser780 each carry phosphoserine. Positions 812 to 823 are enriched in basic and acidic residues; the sequence is MRSELKTKEQIL. Residues 864 to 874 show a composition bias toward basic residues; that stretch reads PSRKGKMRKRM.

The protein belongs to the DEAD box helicase family. DDX54/DBP10 subfamily. Interacts in a hormone-dependent manner with nuclear receptors.

The protein resides in the nucleus. It localises to the nucleolus. The catalysed reaction is ATP + H2O = ADP + phosphate + H(+). Has RNA-dependent ATPase activity. Represses the transcriptional activity of nuclear receptors. This is ATP-dependent RNA helicase DDX54 (Ddx54) from Mus musculus (Mouse).